Reading from the N-terminus, the 93-residue chain is Ferredoxin-2 (93 aa).

Residues 2–91 (YKVTLKTPDG…DVVIETHKED (90 aa)) form the 2Fe-2S ferredoxin-type domain. [2Fe-2S] cluster is bound by residues cysteine 37, cysteine 42, cysteine 45, and cysteine 75.

This sequence belongs to the 2Fe2S plant-type ferredoxin family. It depends on [2Fe-2S] cluster as a cofactor.

Its subcellular location is the plastid. The protein localises to the chloroplast. Functionally, ferredoxins are iron-sulfur proteins that transfer electrons in a wide variety of metabolic reactions. The protein is Ferredoxin-2 of Equisetum arvense (Field horsetail).